The chain runs to 91 residues: Soluble cytochrome b558 (91 aa).

The Cytochrome b5 heme-binding domain occupies Leu-8 to Glu-88. A disulfide bridge connects residues Cys-25 and Cys-54. Positions 43 and 71 each coordinate heme.

In Ectothiorhodospira shaposhnikovii (Ectothiorhodospira vacuolata), this protein is Soluble cytochrome b558.